Here is a 387-residue protein sequence, read N- to C-terminus: 3-ketoacyl-CoA thiolase FadA (387 aa).

Cysteine 91 (acyl-thioester intermediate) is an active-site residue. Catalysis depends on proton acceptor residues histidine 343 and cysteine 373.

The protein belongs to the thiolase-like superfamily. Thiolase family. Heterotetramer of two alpha chains (FadB) and two beta chains (FadA).

Its subcellular location is the cytoplasm. It carries out the reaction an acyl-CoA + acetyl-CoA = a 3-oxoacyl-CoA + CoA. It functions in the pathway lipid metabolism; fatty acid beta-oxidation. In terms of biological role, catalyzes the final step of fatty acid oxidation in which acetyl-CoA is released and the CoA ester of a fatty acid two carbons shorter is formed. Involved in the aerobic and anaerobic degradation of long-chain fatty acids. The chain is 3-ketoacyl-CoA thiolase FadA (fadA) from Escherichia coli (strain K12).